The following is a 1284-amino-acid chain: Integrator complex subunit 6 (1284 aa).

One can recognise a VWFA domain in the interval isoleucine 3 to glycine 134. 4 disordered regions span residues aspartate 653–asparagine 824, glutamate 864–valine 895, threonine 1053–alanine 1086, and asparagine 1125–serine 1180. Positions serine 690 to glycine 721 are enriched in gly residues. 2 stretches are compositionally biased toward low complexity: residues aspartate 752–serine 781 and asparagine 803–asparagine 824. The span at glycine 879–glycine 890 shows a compositional bias: polar residues. 2 stretches are compositionally biased toward low complexity: residues threonine 1053–threonine 1074 and asparagine 1125–asparagine 1141. Over residues isoleucine 1159 to asparagine 1171 the composition is skewed to polar residues.

This sequence belongs to the Integrator subunit 6 family. As to quaternary structure, belongs to the multiprotein complex Integrator, at least composed of IntS1, IntS2, IntS3, IntS4, omd/IntS5, IntS6, defl/IntS7, IntS8, IntS9, IntS10, IntS11, IntS12, asun/IntS13, IntS14 and IntS15. The core complex associates with protein phosphatase 2A subunits mts/PP2A and Pp2A-29B, to form the Integrator-PP2A (INTAC) complex.

The protein resides in the nucleus. In terms of biological role, component of the integrator complex, a multiprotein complex that terminates RNA polymerase II (Pol II) transcription in the promoter-proximal region of genes. The integrator complex provides a quality checkpoint during transcription elongation by driving premature transcription termination of transcripts that are unfavorably configured for transcriptional elongation: the complex terminates transcription by (1) catalyzing dephosphorylation of the C-terminal domain (CTD) of Pol II subunit Polr2A/Rbp1 and Spt5, and (2) degrading the exiting nascent RNA transcript via endonuclease activity. The integrator complex is also involved in the 3'-end processing of the U7 snRNA, and also the spliceosomal snRNAs U1, U2, U4 and U5. Within the integrator complex, IntS6 acts as a substrate adapter for protein phosphatase 2A (PP2A). The sequence is that of Integrator complex subunit 6 from Drosophila melanogaster (Fruit fly).